The following is a 221-amino-acid chain: Probable septum site-determining protein MinC (221 aa).

It belongs to the MinC family. In terms of assembly, interacts with MinD and FtsZ.

Functionally, cell division inhibitor that blocks the formation of polar Z ring septums. Rapidly oscillates between the poles of the cell to destabilize FtsZ filaments that have formed before they mature into polar Z rings. Prevents FtsZ polymerization. The chain is Probable septum site-determining protein MinC from Shewanella baltica (strain OS223).